The following is a 451-amino-acid chain: D(1A) dopamine receptor (451 aa).

Topologically, residues 1–22 are extracellular; it reads MTFNITSMDEDVLLTERESSFR. Asn4 carries an N-linked (GlcNAc...) asparagine glycan. The helical transmembrane segment at 23–48 threads the bilayer; it reads VLTGCFLSVLILSTLLGNTLVCAAVI. Over 49-59 the chain is Cytoplasmic; it reads RFRHLRSKVTN. A helical membrane pass occupies residues 60–86; the sequence is FFVISLAVSDLLVAVLVMPWKAVAEIA. Residues 87–95 are Extracellular-facing; the sequence is GFWPFGTFC. A disulfide bridge links Cys95 with Cys185. The chain crosses the membrane as a helical span at residues 96–118; sequence NIWVAFDIMCSTASILNLCVISV. The Cytoplasmic portion of the chain corresponds to 119 to 137; it reads DRYWAISSPFRYERKMTPK. A helical membrane pass occupies residues 138 to 162; it reads VAFIMIGVAWTLSVLISFIPVQLNW. Over 163–191 the chain is Extracellular; that stretch reads HKAKTTSFFDLNITLHDRTMDNCDSSLNR. The helical transmembrane segment at 192–217 threads the bilayer; sequence TYAISSSLISFYIPVAIMIVTYTRIY. At 218–271 the chain is on the cytoplasmic side; sequence RIAAKQIRRISALERAAVHAKNCQNSTSNRNSLDCQQPESSLKTSFKRETKVLK. The helical transmembrane segment at 272 to 298 threads the bilayer; it reads TLSVIMGVFVCCWLPFFILNCIVPFCD. Residues 299–315 lie on the Extracellular side of the membrane; the sequence is PSLTTSGTEPFCISSTT. A helical transmembrane segment spans residues 316 to 340; that stretch reads FDVFVWFGWANSSLNPIIYAFNADF. Residues 341-451 are Cytoplasmic-facing; the sequence is RKAFSNLLGC…PITQNGQPKT (111 aa). Residue Cys350 is the site of S-palmitoyl cysteine attachment.

The protein belongs to the G-protein coupled receptor 1 family. Brain.

The protein resides in the cell membrane. The protein localises to the cell projection. It is found in the cilium membrane. Its function is as follows. Dopamine receptor whose activity is mediated by G proteins which activate adenylyl cyclase. The protein is D(1A) dopamine receptor (drd1) of Xenopus laevis (African clawed frog).